Reading from the N-terminus, the 193-residue chain is Acyl carrier protein phosphodiesterase (193 aa).

The protein belongs to the AcpH family.

It catalyses the reaction holo-[ACP] + H2O = apo-[ACP] + (R)-4'-phosphopantetheine + H(+). Converts holo-ACP to apo-ACP by hydrolytic cleavage of the phosphopantetheine prosthetic group from ACP. The sequence is that of Acyl carrier protein phosphodiesterase from Shigella boydii serotype 18 (strain CDC 3083-94 / BS512).